Consider the following 367-residue polypeptide: Glutamate 5-kinase (367 aa).

Lys10 lines the ATP pocket. Substrate-binding residues include Ser50, Asp137, and Asn149. ATP is bound by residues 169 to 170 and 211 to 217; these read TD and TGGMSTK. The PUA domain occupies 275–353; that stretch reads AGEITVDDGA…QQIAEILGYE (79 aa).

The protein belongs to the glutamate 5-kinase family.

It localises to the cytoplasm. It carries out the reaction L-glutamate + ATP = L-glutamyl 5-phosphate + ADP. The protein operates within amino-acid biosynthesis; L-proline biosynthesis; L-glutamate 5-semialdehyde from L-glutamate: step 1/2. Its function is as follows. Catalyzes the transfer of a phosphate group to glutamate to form L-glutamate 5-phosphate. The chain is Glutamate 5-kinase from Pectobacterium atrosepticum (strain SCRI 1043 / ATCC BAA-672) (Erwinia carotovora subsp. atroseptica).